Here is a 60-residue protein sequence, read N- to C-terminus: Metallothionein B (60 aa).

A beta region spans residues 1 to 28 (MDPCDCSKSGTCNCGGSCTCTNCSCTSC). A divalent metal cation is bound by residues C4, C6, C12, C14, C18, C20, C23, C25, C28, C32, C33, C35, C36, C40, C43, C47, C49, C54, C58, and C59. The segment at 29 to 60 (KKSCCPCCPSGCTKCASGCVCKGKTCDTSCCQ) is alpha.

Belongs to the metallothionein superfamily. Type 1 family.

Its function is as follows. Metallothioneins have a high content of cysteine residues that bind various heavy metals. The protein is Metallothionein B (mtb) of Chionodraco hamatus (Antarctic teleost icefish).